We begin with the raw amino-acid sequence, 513 residues long: Pleiotropic regulator 1 (513 aa).

Residue Met1 is modified to N-acetylmethionine. 2 positions are modified to phosphoserine: Ser119 and Ser200. WD repeat units follow at residues 201–240 (GHLGWVRCIAVEPGNQWFVTGSADRTIKIWDLASGKLKLS), 243–282 (GHISTVRGVIVSTRSPYLFSCGEDKQVKCWDLEYNKVIRH), 285–324 (GHLSAVYGLDLHPTIDVLVTCSRDSTARIWDVRTKASVHT), 327–366 (GHTNAVATVRCQAAEPQIITGSHDTTIRLWDLVAGKTRVT), 369–409 (NHKK…QNLS), 410–448 (GHNAIINTLTVNSDGVLVSGADNGTMHLWDWRTGYNFQR), and 459–498 (DSESGIFACAFDQSESRLLTAEADKTIKVYKEDDTATEET). Phosphoserine is present on Ser390.

The protein belongs to the WD repeat PRL1/PRL2 family. In terms of assembly, identified in the spliceosome C complex. Component of the PRP19-CDC5L splicing complex composed of a core complex comprising a homotetramer of PRPF19, CDC5L, PLRG1 and BCAS2, and at least three less stably associated proteins CTNNBL1, CWC15 and HSPA8. Interacts (via its WD40 repeat domain) directly with CDC5L (via its C-terminal); the interaction is required for mRNA splicing but not for spliceosome assembly. Component of the minor spliceosome, which splices U12-type introns. Within this complex, interacts with CRIPT. Also interacts directly in the complex with BCAS2 and PRPF19. Interacts with USB1.

It localises to the nucleus. The protein localises to the nucleus speckle. Functionally, involved in pre-mRNA splicing as component of the spliceosome. Component of the PRP19-CDC5L complex that forms an integral part of the spliceosome and is required for activating pre-mRNA splicing. As a component of the minor spliceosome, involved in the splicing of U12-type introns in pre-mRNAs. The protein is Pleiotropic regulator 1 (PLRG1) of Bos taurus (Bovine).